A 226-amino-acid chain; its full sequence is Cytidylate kinase (226 aa).

10 to 18 (GPASSGKST) is a binding site for ATP.

It belongs to the cytidylate kinase family. Type 1 subfamily.

Its subcellular location is the cytoplasm. It carries out the reaction CMP + ATP = CDP + ADP. It catalyses the reaction dCMP + ATP = dCDP + ADP. The polypeptide is Cytidylate kinase (Streptococcus equi subsp. zooepidemicus (strain MGCS10565)).